A 298-amino-acid polypeptide reads, in one-letter code: UDP-3-O-acyl-N-acetylglucosamine deacetylase (298 aa).

Zn(2+)-binding residues include His-75, His-232, and Asp-236. The Proton donor role is filled by His-259.

Belongs to the LpxC family. The cofactor is Zn(2+).

It carries out the reaction a UDP-3-O-[(3R)-3-hydroxyacyl]-N-acetyl-alpha-D-glucosamine + H2O = a UDP-3-O-[(3R)-3-hydroxyacyl]-alpha-D-glucosamine + acetate. The protein operates within glycolipid biosynthesis; lipid IV(A) biosynthesis; lipid IV(A) from (3R)-3-hydroxytetradecanoyl-[acyl-carrier-protein] and UDP-N-acetyl-alpha-D-glucosamine: step 2/6. Its function is as follows. Catalyzes the hydrolysis of UDP-3-O-myristoyl-N-acetylglucosamine to form UDP-3-O-myristoylglucosamine and acetate, the committed step in lipid A biosynthesis. The polypeptide is UDP-3-O-acyl-N-acetylglucosamine deacetylase (Nitratiruptor sp. (strain SB155-2)).